A 114-amino-acid chain; its full sequence is Large ribosomal subunit protein bL17 (114 aa).

The protein belongs to the bacterial ribosomal protein bL17 family. Part of the 50S ribosomal subunit. Contacts protein L32.

This is Large ribosomal subunit protein bL17 from Elusimicrobium minutum (strain Pei191).